The sequence spans 139 residues: Metallothiol transferase FosB (139 aa).

Residues 4–119 enclose the VOC domain; that stretch reads GINHITYSVS…DGHKLELHTG (116 aa). 3 residues coordinate Mg(2+): H7, H66, and E115. E115 serves as the catalytic Proton donor/acceptor.

Belongs to the fosfomycin resistance protein family. FosB subfamily. As to quaternary structure, homodimer. Requires Mg(2+) as cofactor.

It is found in the cytoplasm. Metallothiol transferase which confers resistance to fosfomycin by catalyzing the addition of a thiol cofactor to fosfomycin. L-cysteine is probably the physiological thiol donor. This chain is Metallothiol transferase FosB, found in Staphylococcus epidermidis.